A 181-amino-acid chain; its full sequence is Reverse rubrerythrin-1 (181 aa).

Residues 1–35 (MKKFKCVVCGYIYTGEDAPEKCPVCGAGKDKFVEV) form the Rubredoxin-like domain. Positions 6, 9, 22, 25, 69, 102, 132, 165, and 168 each coordinate Fe cation. One can recognise a Ferritin-like diiron domain in the interval 52–181 (KGVDKEVLEG…FRGLLNRYFK (130 aa)).

In terms of assembly, homodimer. It depends on Fe(3+) as a cofactor.

It carries out the reaction H2O2 + NADH + H(+) = NAD(+) + 2 H2O. Its function is as follows. Functions as the terminal component of an NADH peroxidase (NADH:H(2)O(2) oxidoreductase) when using NADH:rubredoxin oxidoreductase (NROR) and rubredoxin (Rd) as electron transport intermediaries from NADH to revRbr 1. Plays an important role in the oxidative stress defense system in C.acetobutylicum, an obligate anaerobic bacterium. Also exhibits NADH oxidase (NADH:O(2) oxidoreductase) activity in vitro, which is 100-fold lesser than that of FprA1/2 using the same electron transfer components. Therefore, its predominant function is most likely as a scavenger of its preferred substrate, H(2)O(2). This Clostridium acetobutylicum (strain ATCC 824 / DSM 792 / JCM 1419 / IAM 19013 / LMG 5710 / NBRC 13948 / NRRL B-527 / VKM B-1787 / 2291 / W) protein is Reverse rubrerythrin-1 (rbr3A).